The chain runs to 330 residues: Bifunctional pinoresinol-lariciresinol reductase 2 (330 aa).

NADP(+)-binding positions include 28–34 (GGTGYLG), Arg53, and Lys62. Lys156 acts as the Proton acceptor in catalysis. NADP(+) is bound at residue Arg160. Substrate is bound at residue His288.

The protein belongs to the NmrA-type oxidoreductase family. Isoflavone reductase subfamily. Dimer. As to expression, expressed in leaves, stems, leaves and seeds.

It carries out the reaction (+)-lariciresinol + NADP(+) = (+)-pinoresinol + NADPH + H(+). The enzyme catalyses (-)-secoisolariciresinol + NADP(+) = (+)-lariciresinol + NADPH + H(+). Its function is as follows. Reductase involved in lignan biosynthesis. Catalyzes the enantioselective conversion of (+)-pinoresinol into (+)-lariciresinol and of (+)-lariciresinol into (-)-secoisolariciresinol. Abstracts the 4R-hydride from the NADPH cofactor during catalysis. The sequence is that of Bifunctional pinoresinol-lariciresinol reductase 2 (PLR_Lu2) from Linum usitatissimum (Flax).